Reading from the N-terminus, the 332-residue chain is Melanocortin receptor 4 (332 aa).

Residues 1 to 43 (MNSTHHHGMHTSLHFWNRSTYGLHSNASEPLGKGYSEGGCYEQ) lie on the Extracellular side of the membrane. Asparagine 2, asparagine 17, and asparagine 26 each carry an N-linked (GlcNAc...) asparagine glycan. Cystine bridges form between cysteine 40–cysteine 279 and cysteine 271–cysteine 277. A helical membrane pass occupies residues 44–69 (LFVSPEVFVTLGVISLLENILVIVAI). The Cytoplasmic segment spans residues 70 to 81 (AKNKNLHSPMYF). Residues 82–106 (FICSLAVADMLVSVSNGSETIVITL) traverse the membrane as a helical segment. Ca(2+)-binding residues include glutamate 100, aspartate 122, and aspartate 126. Residues 107–123 (LNSTDTDAQSFTVNIDN) lie on the Extracellular side of the membrane. Residues 124–145 (VIDSVICSSLLASICSLLSIAV) form a helical membrane-spanning segment. Residues 146-165 (DRYFTIFYALQYHNIMTVKR) lie on the Cytoplasmic side of the membrane. The helical transmembrane segment at 166 to 186 (VGIIISCIWAVCTVSGVLFII) threads the bilayer. Topologically, residues 187-191 (YSDSS) are extracellular. A helical transmembrane segment spans residues 192–215 (AVIICLITVFFTMLALMASLYVHM). The Cytoplasmic segment spans residues 216-248 (FLMARLHIKRIAVLPGTGTIRQGANMKGAITLT). Residues 249–271 (ILIGVFVVCWAPFFLHLIFYISC) form a helical membrane-spanning segment. Topologically, residues 272–280 (PQNPYCVCF) are extracellular. A helical membrane pass occupies residues 281 to 304 (MSHFNLYLILIMCNSIIDPLIYAL). At 305–332 (RSQELRKTFKEIICCYPLGGLCDLSSRY) the chain is on the cytoplasmic side. Cysteine 318 is lipidated: S-palmitoyl cysteine.

It belongs to the G-protein coupled receptor 1 family. As to quaternary structure, homodimer; disulfide-linked, also forms higher order oligomers. Interacts with GNAS. Interacts with ATRNL1. Interacts with MGRN1; this interaction competes with GNAS-binding and thus inhibits agonist-induced cAMP production. Interacts with MRAP and MRAP2; these associated factors increase ligand-sensitivity and generation of cAMP.

It is found in the cell membrane. Hormone receptor that acts as a key component of the leptin-melanocortin pathway at the intersection of homeostatic maintenance of energetic state. Plays a role in regulating food intake: activation by a stimulating hormone such as anorexigenic alpha-melanocyte stimulating hormone (alpha-MSH) inhibits appetite, whereas binding to a natural antagonist like Agouti-related protein/AGRP promotes appetite. G-protein-coupled receptor that activates conventional Galphas signaling leading to induction of anorexogenic signaling in the hypothalamus to result in negative energy balance. Regulates the firing activity of neurons from the hypothalamus by alpha-MSH and AGRP independently of Galphas signaling by ligand-induced coupling of closure of inwardly rectifying potassium channel KCNJ13. In intestinal epithelial cells, plays a role in the inhibition of hepatic glucose production via nesfatin-1/NUCB2 leading to increased cyclic adenosine monophosphate (cAMP) levels and glucagon-like peptide 1 (GLP-1) secretion in the intestinal epithelium. This is Melanocortin receptor 4 (MC4R) from Sus scrofa (Pig).